The following is a 326-amino-acid chain: 4-hydroxythreonine-4-phosphate dehydrogenase (326 aa).

2 residues coordinate substrate: histidine 132 and threonine 133. Residues histidine 163, histidine 208, and histidine 263 each coordinate a divalent metal cation. Residues lysine 271, asparagine 280, and arginine 289 each contribute to the substrate site.

This sequence belongs to the PdxA family. As to quaternary structure, homodimer. Requires Zn(2+) as cofactor. Mg(2+) is required as a cofactor. The cofactor is Co(2+).

It is found in the cytoplasm. The enzyme catalyses 4-(phosphooxy)-L-threonine + NAD(+) = 3-amino-2-oxopropyl phosphate + CO2 + NADH. It participates in cofactor biosynthesis; pyridoxine 5'-phosphate biosynthesis; pyridoxine 5'-phosphate from D-erythrose 4-phosphate: step 4/5. Its function is as follows. Catalyzes the NAD(P)-dependent oxidation of 4-(phosphooxy)-L-threonine (HTP) into 2-amino-3-oxo-4-(phosphooxy)butyric acid which spontaneously decarboxylates to form 3-amino-2-oxopropyl phosphate (AHAP). The chain is 4-hydroxythreonine-4-phosphate dehydrogenase from Roseobacter denitrificans (strain ATCC 33942 / OCh 114) (Erythrobacter sp. (strain OCh 114)).